A 61-amino-acid chain; its full sequence is Small ribosomal subunit protein uS14 (61 aa).

The Zn(2+) site is built by Cys24, Cys27, Cys40, and Cys43.

This sequence belongs to the universal ribosomal protein uS14 family. Zinc-binding uS14 subfamily. In terms of assembly, part of the 30S ribosomal subunit. Contacts proteins S3 and S10. It depends on Zn(2+) as a cofactor.

Binds 16S rRNA, required for the assembly of 30S particles and may also be responsible for determining the conformation of the 16S rRNA at the A site. This Geobacillus stearothermophilus (Bacillus stearothermophilus) protein is Small ribosomal subunit protein uS14.